The chain runs to 239 residues: Riboflavin synthase (239 aa).

2 Lumazine-binding repeats span residues 1 to 105 (MFTG…MGGH) and 106 to 205 (VVQG…EKQI). Residues 4–6 (GLV), 54–56 (CLT), 70–75 (GISPET), 109–111 (GHV), lysine 145, 154–156 (SLT), and 170–175 (SMVSYT) each bind 2,4-dihydroxypteridine.

In terms of assembly, homotrimer.

It carries out the reaction 2 6,7-dimethyl-8-(1-D-ribityl)lumazine + H(+) = 5-amino-6-(D-ribitylamino)uracil + riboflavin. It functions in the pathway cofactor biosynthesis; riboflavin biosynthesis; riboflavin from 2-hydroxy-3-oxobutyl phosphate and 5-amino-6-(D-ribitylamino)uracil: step 2/2. Functionally, catalyzes the dismutation of two molecules of 6,7-dimethyl-8-ribityllumazine, resulting in the formation of riboflavin and 5-amino-6-(D-ribitylamino)uracil. The polypeptide is Riboflavin synthase (RIB5) (Meyerozyma guilliermondii (strain ATCC 6260 / CBS 566 / DSM 6381 / JCM 1539 / NBRC 10279 / NRRL Y-324) (Yeast)).